The following is a 685-amino-acid chain: MIDRYKHQQLRIGLVSPQQISAWANKILPNGEIVGEVTKPYTFHYKTNKPERDGLFCERIFGPIKSGICACGNYRVIGDEKEDPKFCEQCGVEFVDSRIRRYQMGYIKLACPVTHVWYLKRIPSYIANLLDKPLKELEGLVYCDFSFARPVAKKPTFLRLRGSFEYEIQSRKYSIPLFFTTQGFDTFRNREISTGAGAIREQLADPDLRIITDYSLGEWKELGEEGPTGNEWEDRKIGRRKDFLVRRMELAKHFIRTKVEPERMVLCLLPVLPPELRPIIQIDGGKSMSSDINELYRRVIYRNNTLIDLLTTSRSTPRELVMCQEKLVQEAVDTLLDNGIRGQPMRDGHNKVYKSFSDVIEGKEGRFRETLLGKRVDYSGRSVIVVGPSLSLHRCGLPREIAIELFQTFVIRGLIRQHVASNIGVAKSKIREKEPIVWEILQEVMQGHPVLLNRAPTLHRLGIQAFQPILVEGRAICLHPLVCKGFNADFDGDQMAVHVPLSLEAQAEARLLMFSHMNLLSPAIGDPISVPTQDMLIGLYVLTSGNRRGICANRYNPCNRGNRVNFQNERIDDNNYKYTKEKDPYFCSSYDAIGAYRQKRINLDSPLWLRWRLDQRIIASREVPIEVHYESLGTYHEIYVNYLIVKSVKKEILCIYIRTTVGHIYFYRKIEEAVQGFFRACSYGT.

Residues Cys-69, Cys-71, Cys-87, and Cys-90 each contribute to the Zn(2+) site. Asp-489, Asp-491, and Asp-493 together coordinate Mg(2+).

The protein belongs to the RNA polymerase beta' chain family. RpoC1 subfamily. In terms of assembly, in plastids the minimal PEP RNA polymerase catalytic core is composed of four subunits: alpha, beta, beta', and beta''. When a (nuclear-encoded) sigma factor is associated with the core the holoenzyme is formed, which can initiate transcription. The cofactor is Mg(2+). Requires Zn(2+) as cofactor.

It is found in the plastid. The protein resides in the chloroplast. The enzyme catalyses RNA(n) + a ribonucleoside 5'-triphosphate = RNA(n+1) + diphosphate. In terms of biological role, DNA-dependent RNA polymerase catalyzes the transcription of DNA into RNA using the four ribonucleoside triphosphates as substrates. The protein is DNA-directed RNA polymerase subunit beta' of Buxus microphylla (Littleleaf boxwood).